Here is a 468-residue protein sequence, read N- to C-terminus: Peripherin (468 aa).

A compositionally biased stretch (low complexity) spans 1–16 (MSHHSSGLRSSISSTS). The interval 1-22 (MSHHSSGLRSSISSTSYRRTFG) is disordered. The tract at residues 1 to 96 (MSHHSSGLRS…FLATRSNEKQ (96 aa)) is head. Position 17 is a 3'-nitrotyrosine (Tyr-17). Ser-28, Ser-50, and Ser-59 each carry phosphoserine. An IF rod domain is found at 94–404 (EKQELQELND…KLLEGEESRI (311 aa)). A coil 1A region spans residues 97 to 129 (ELQELNDRFANFIEKVRFLEQQNAALRGELSQA). The segment at 130–140 (RGQEPARADQL) is linker 1. The tract at residues 141–236 (CQQELRELRR…KLHEEELRDL (96 aa)) is coil 1B. The segment at 237 to 259 (QVSVESQQVQQVEVEATVKPELT) is linker 2. Positions 260 to 402 (AALRDIRAQY…YRKLLEGEES (143 aa)) are coil 2. Tyr-376 is modified (3'-nitrotyrosine). The tract at residues 403-468 (RISVPVHSFA…ELDKSSIHSY (66 aa)) is tail. The segment at 445 to 468 (GEKVVTESQKEQHSELDKSSIHSY) is disordered. The residue at position 468 (Tyr-468) is a Phosphotyrosine.

The protein belongs to the intermediate filament family. Forms homodimers (in vitro). Homopolymerizes into a filamentous network (in vitro). Forms heterodimers with NEFL, NEFM or NEFH (in vitro). Interacts with DST (via C-terminus). Interacts with RAB7A; the interaction is direct. Interacts with PRKCE (via phorbol-ester/DAG-type 2 domain). In terms of processing, phosphorylated; phosphorylation increases after nerve injury in regenerating neurons. Expressed in hypoglossal motor neurons (at protein level). Expressed in the small and large sensory neurons of the dorsal root ganglion (at protein level). Expressed in cutaneous and muscular sensory neurons.

It localises to the cytoplasm. The protein resides in the cytoskeleton. It is found in the cell projection. Its subcellular location is the axon. The protein localises to the perikaryon. Functionally, class-III neuronal intermediate filament protein. My form an independent structural network without the involvement of other neurofilaments or may cooperate with the neuronal intermediate filament proteins NEFL, NEFH, NEFM and INA to form a filamentous network. Assembly of the neuronal intermediate filaments may be regulated by RAB7A. Plays a role in the development of unmyelinated sensory neurons. May be involved in axon elongation and axon regeneration after injury. Inhibits neurite extension in type II spiral ganglion neurons in the cochlea. The sequence is that of Peripherin (Prph) from Rattus norvegicus (Rat).